We begin with the raw amino-acid sequence, 791 residues long: Probable potassium transporter 11 (791 aa).

The Cytoplasmic segment spans residues 1–49; that stretch reads MASLSESEGTNRGSMWELDQNLDQPMDEEASRLKNMYREKKFSSLLLLR. The chain crosses the membrane as a helical span at residues 50-70; it reads LAFQSLGVVFGDLGTSPLYVF. Topologically, residues 71-87 are extracellular; it reads YNAFPHGVDDEEDVIGA. A helical membrane pass occupies residues 88–108; the sequence is LSLIIYTLTLIPLLKYVFVVL. Over 109 to 175 the chain is Cytoplasmic; the sequence is RANDNGQGGT…EAHAYKRNCL (67 aa). Residues 176–196 traverse the membrane as a helical segment; the sequence is LIVVLIGTCTAIGDGILTPAI. Residues 197-215 lie on the Extracellular side of the membrane; the sequence is SVLSASGGIKVQNPNMSTD. A glycan (N-linked (GlcNAc...) asparagine) is linked at Asn211. Residues 216–236 form a helical membrane-spanning segment; it reads VVVIVSVIILIGLFSMQHYGT. Residues 237–238 lie on the Cytoplasmic side of the membrane; it reads DK. A helical transmembrane segment spans residues 239 to 259; it reads VGWLFAPIVLLWFILIGSVGA. Over 260 to 289 the chain is Extracellular; it reads LNIHKYKGSVLKAYNPVYIYRYFQRRNSDS. A helical membrane pass occupies residues 290–310; that stretch reads WASLGGIMLSITGTEALFADL. Residues 311–315 lie on the Cytoplasmic side of the membrane; that stretch reads CHFPV. Residues 316–338 form a helical membrane-spanning segment; that stretch reads FAIQIAFTLIVFPCLLLAYTGQA. Topologically, residues 339 to 359 are extracellular; that stretch reads AYIIAHKDHVADAFYRSIPDS. The chain crosses the membrane as a helical span at residues 360–380; sequence IYWPAFVIATAAAIVASQATI. At 381–411 the chain is on the cytoplasmic side; sequence SATYSIIKQALALGCFPRVKIVHTSKKFLGQ. The helical transmembrane segment at 412–432 threads the bilayer; sequence IYIPDINWVLLILCIAVTAGF. Residues 433 to 444 are Extracellular-facing; that stretch reads KNQSQIGNAYGT. N-linked (GlcNAc...) asparagine glycosylation is present at Asn434. A helical transmembrane segment spans residues 445 to 465; that stretch reads AVVIVMLVTTFLMVPIMLLVW. The Cytoplasmic portion of the chain corresponds to 466–468; it reads KSH. Residues 469 to 489 form a helical membrane-spanning segment; sequence WILVVTFIVLSLMVEIPYFSA. Residues 490–496 lie on the Extracellular side of the membrane; the sequence is CLLKIDQ. Residues 497–517 form a helical membrane-spanning segment; the sequence is GGWVPLVIATAFFIIMYVWHF. The Cytoplasmic segment spans residues 518–791; that stretch reads CTVKRYEFEM…LLNVGQIYYI (274 aa).

This sequence belongs to the HAK/KUP transporter (TC 2.A.72.3) family.

Its subcellular location is the membrane. High-affinity potassium transporter. The sequence is that of Probable potassium transporter 11 from Oryza sativa subsp. japonica (Rice).